The chain runs to 842 residues: Unconventional myosin-Ia (842 aa).

Residues 1–686 (GVEDLILLEP…TLFYLEEQRR (686 aa)) form the Myosin motor domain. An ATP-binding site is contributed by 93–100 (GESGAGKT). The segment at 563 to 585 (VAILMKNLYSKNPNYIRCIKPND) is actin-binding. IQ domains follow at residues 689-712 (LQQL…YQQM), 713-733 (RKSQ…KHYG), and 735-764 (IRSS…SGAR).

Belongs to the TRAFAC class myosin-kinesin ATPase superfamily. Myosin family. Phosphorylated by ALPK1.

Involved in directing the movement of organelles along actin filaments. The protein is Unconventional myosin-Ia (Myo1a) of Rattus norvegicus (Rat).